A 176-amino-acid polypeptide reads, in one-letter code: Large ribosomal subunit protein uL16 (176 aa).

It belongs to the universal ribosomal protein uL16 family.

This is Large ribosomal subunit protein uL16 from Thermoplasma volcanium (strain ATCC 51530 / DSM 4299 / JCM 9571 / NBRC 15438 / GSS1).